Here is a 473-residue protein sequence, read N- to C-terminus: Photosystem II CP43 reaction center protein (473 aa).

Positions 1–14 (MKILYSLRRFYHVE) are excised as a propeptide. An N-acetylthreonine modification is found at threonine 15. Threonine 15 is modified (phosphothreonine). 5 helical membrane-spanning segments follow: residues 69–93 (LFEVAHFVPEKPMYEQGLILLPHLA), 134–155 (LLGPETLEESFPFFGYVWKDRN), 178–200 (KALYFGGVYDTWAPGGGDVRKIT), 255–275 (KPFAWARRAFVWSGEAYLSYS), and 291–312 (WFNNTAYPSEFYGPTGPEASQA). Glutamate 367 lines the [CaMn4O5] cluster pocket. Residues 447 to 471 (RARAAAAGFEKGIDRDLEPVLYMNP) traverse the membrane as a helical segment.

Belongs to the PsbB/PsbC family. PsbC subfamily. As to quaternary structure, PSII is composed of 1 copy each of membrane proteins PsbA, PsbB, PsbC, PsbD, PsbE, PsbF, PsbH, PsbI, PsbJ, PsbK, PsbL, PsbM, PsbT, PsbX, PsbY, PsbZ, Psb30/Ycf12, at least 3 peripheral proteins of the oxygen-evolving complex and a large number of cofactors. It forms dimeric complexes. Binds multiple chlorophylls and provides some of the ligands for the Ca-4Mn-5O cluster of the oxygen-evolving complex. It may also provide a ligand for a Cl- that is required for oxygen evolution. PSII binds additional chlorophylls, carotenoids and specific lipids. serves as cofactor.

It is found in the plastid. The protein resides in the chloroplast thylakoid membrane. One of the components of the core complex of photosystem II (PSII). It binds chlorophyll and helps catalyze the primary light-induced photochemical processes of PSII. PSII is a light-driven water:plastoquinone oxidoreductase, using light energy to abstract electrons from H(2)O, generating O(2) and a proton gradient subsequently used for ATP formation. This is Photosystem II CP43 reaction center protein from Hordeum vulgare (Barley).